We begin with the raw amino-acid sequence, 736 residues long: Probable potassium transport system protein Kup 2 (736 aa).

Helical transmembrane passes span 1 to 21 (MAIVALGVVYGDIGTSPLYTA), 42 to 62 (MLSLVFWSITLITTVKYVLIA), 84 to 104 (GAWLAIPAMLGGAAFLADSVL), 126 to 146 (LFDENPSLTLMITVVIIVILF), 156 to 176 (IGKVFGSMVLVWFGFLAIVGV), 204 to 224 (AAGIALMGTVFLSTTGAEALY), 239 to 259 (WPFIKVALVLNYFGQGAWMLA), 287 to 307 (AVILSVSAGVIASQALITGAF), 334 to 354 (LYIPVVNGVLCVSTLAVLAIF), 364 to 384 (YGLALTITMITTTVLLGVYLW), 390 to 410 (VGAIVFTVLFLAIQAMFFIAS), and 414 to 434 (FLHGGWFTMLLTAAILFVMYT). Disordered stretches follow at residues 649–678 (TDTAKTIPTPTPTRAVADPAAVPDPMDTTS) and 693–736 (AEAR…KQKR). Low complexity-rich tracts occupy residues 660–677 (PTRAVADPAAVPDPMDTT) and 700–709 (EAAAADAPAE). The segment covering 710–721 (QGDKGDKGKAEN) has biased composition (basic and acidic residues).

It belongs to the HAK/KUP transporter (TC 2.A.72) family.

The protein localises to the cell membrane. The catalysed reaction is K(+)(in) + H(+)(in) = K(+)(out) + H(+)(out). Functionally, transport of potassium into the cell. Likely operates as a K(+):H(+) symporter. The polypeptide is Probable potassium transport system protein Kup 2 (Bifidobacterium longum (strain NCC 2705)).